We begin with the raw amino-acid sequence, 151 residues long: Transcriptional regulator MraZ (151 aa).

SpoVT-AbrB domains are found at residues I5 to E52 and A81 to E124.

Belongs to the MraZ family. As to quaternary structure, forms oligomers.

It localises to the cytoplasm. Its subcellular location is the nucleoid. This chain is Transcriptional regulator MraZ, found in Marinomonas sp. (strain MWYL1).